Consider the following 222-residue polypeptide: Ribonuclease T (222 aa).

Residues Val-20–Phe-194 enclose the Exonuclease domain. Positions 23, 25, 181, and 186 each coordinate Mg(2+). The active-site Proton donor/acceptor is the His-181.

This sequence belongs to the RNase T family. Homodimer. Mg(2+) serves as cofactor.

Functionally, trims short 3' overhangs of a variety of RNA species, leaving a one or two nucleotide 3' overhang. Responsible for the end-turnover of tRNA: specifically removes the terminal AMP residue from uncharged tRNA (tRNA-C-C-A). Also appears to be involved in tRNA biosynthesis. This Shewanella sp. (strain MR-4) protein is Ribonuclease T.